A 573-amino-acid chain; its full sequence is Glutathione hydrolase 5 proenzyme (573 aa).

Residues 1–8 (MAWGHRAT) are Cytoplasmic-facing. Residues 9–29 (VCLVLLGVGLGLVIVVLAAVL) traverse the membrane as a helical; Signal-anchor for type II membrane protein segment. At 30-573 (SPRQASCGPG…LRKAGKASGY (544 aa)) the chain is on the extracellular side. The N-linked (GlcNAc...) asparagine glycan is linked to Asn-98. Position 110 (Arg-110) interacts with L-glutamate. Residues Asn-185, Asn-204, Asn-277, Asn-303, Asn-347, and Asn-378 are each glycosylated (N-linked (GlcNAc...) asparagine). Thr-389 acts as the Nucleophile in catalysis. L-glutamate-binding positions include Thr-407, Glu-428, and 454-455 (SS).

Belongs to the gamma-glutamyltransferase family. Heterodimer composed of the light and heavy chains. The active site is located in the light chain. Cleaved by autocatalysis into a large and a small subunit. In terms of processing, glycosylated. As to expression, very low level of expression. Detected in spleen lymphocytes, medullary and paracortical thymic lymphocytes, lung interstitial cells, bronchial epithelium, proximal tubules in kidney, crypt cells in small intestine, neurons in brain stem and cerebral cortex and in Purkinje cells. Very low expression.

The protein localises to the membrane. The enzyme catalyses glutathione + H2O = L-cysteinylglycine + L-glutamate. It carries out the reaction an S-substituted glutathione + H2O = an S-substituted L-cysteinylglycine + L-glutamate. It catalyses the reaction leukotriene C4 + H2O = leukotriene D4 + L-glutamate. The catalysed reaction is S-[(2E,6E,10E)-geranylgeranyl]-L-glutathione + H2O = S-[(2E,6E,10E)-geranylgeranyl]-L-cysteinylglycine + L-glutamate. The enzyme catalyses an N-terminal (5-L-glutamyl)-[peptide] + an alpha-amino acid = 5-L-glutamyl amino acid + an N-terminal L-alpha-aminoacyl-[peptide]. The protein operates within lipid metabolism; leukotriene D4 biosynthesis. It participates in sulfur metabolism; glutathione metabolism. Inhibited by serine-borate. Functionally, cleaves the gamma-glutamyl bond of extracellular glutathione tripeptide (gamma-Glu-Cys-Gly) and certain glutathione conjugates. Hydrolyzes glutathione releasing L-Glu and Cys-Gly dipeptide which is further metabolized to maintain extracellular cysteine levels but also to provide cysteine necessary for intracellular glutathione synthesis. Among glutathione-S-conjugates metabolizes leukotriene C4 (LTC4) and S-geranylgeranyl-glutathione (GGG), but is inactive toward gamma-glutamyl leucine. Converts extracellular LTC4 to LTD4 during acute inflammatory response. Acts as a negative regulator of GGG bioactivity. GGT5 (via GGG catabolism) and ABCC1 (via extracellular transport) establish GGG gradients within lymphoid tissues to position P2RY8-positive lymphocytes at germinal centers in lymphoid follicles and restrict their chemotactic transmigration from blood vessels to bone marrow parenchyma. The transpeptidation reaction, i.e. the transfer of gamma-glutamyl moiety to an acceptor molecule to yield a new gamma-glutamyl compound requires high concentration of dipeptide acceptor and is considered nonphysiological. The protein is Glutathione hydrolase 5 proenzyme (Ggt5) of Mus musculus (Mouse).